A 209-amino-acid chain; its full sequence is Ferritin heavy chain (209 aa).

The first 27 residues, Met-1–Gln-27, serve as a signal peptide directing secretion. Positions Asp-40 to Lys-193 constitute a Ferritin-like diiron domain. Fe cation-binding residues include Glu-57, Glu-92, His-95, Glu-140, and Gln-175.

This sequence belongs to the ferritin family. In terms of assembly, oligomer of 24 subunits. There are two types of subunits: L (light) chain and H (heavy) chain. The functional molecule forms a roughly spherical shell with a diameter of 12 nm and contains a central cavity into which the insoluble mineral iron core is deposited.

Its subcellular location is the secreted. It is found in the cytoplasm. The enzyme catalyses 4 Fe(2+) + O2 + 4 H(+) = 4 Fe(3+) + 2 H2O. Functionally, stores iron in a soluble, non-toxic, readily available form. Important for iron homeostasis. Has ferroxidase activity. Iron is taken up in the ferrous form and deposited as ferric hydroxides after oxidation. The chain is Ferritin heavy chain (FERH) from Aedes aegypti (Yellowfever mosquito).